The primary structure comprises 264 residues: Zinc finger protein CG30 (264 aa).

The RING-type zinc finger occupies 8 to 63 (CNICFSVAEIKNYFLQPIDRLTIIPVLELDTCKHQLCSMCIRKIRKRKKVPCPLCR).

It is found in the host nucleus. Functionally, plays a role in the proper expression of late and very late genes. This Autographa californica nuclear polyhedrosis virus (AcMNPV) protein is Zinc finger protein CG30 (CG30).